Reading from the N-terminus, the 380-residue chain is Phospho-N-acetylmuramoyl-pentapeptide-transferase (380 aa).

A run of 9 helical transmembrane segments spans residues 25–45, 70–90, 98–118, 142–162, 173–193, 209–229, 245–265, 272–294, and 357–377; these read RAAA…PAII, TTPT…VLLW, VLLA…DDYL, VLCG…TLPG, VLVV…VTFI, GLSS…AYVL, GAGE…GFLW, QVFM…AILL, and QVVV…LSTL.

The protein belongs to the glycosyltransferase 4 family. MraY subfamily. Mg(2+) serves as cofactor.

Its subcellular location is the cell inner membrane. The enzyme catalyses UDP-N-acetyl-alpha-D-muramoyl-L-alanyl-gamma-D-glutamyl-meso-2,6-diaminopimeloyl-D-alanyl-D-alanine + di-trans,octa-cis-undecaprenyl phosphate = di-trans,octa-cis-undecaprenyl diphospho-N-acetyl-alpha-D-muramoyl-L-alanyl-D-glutamyl-meso-2,6-diaminopimeloyl-D-alanyl-D-alanine + UMP. Its pathway is cell wall biogenesis; peptidoglycan biosynthesis. In terms of biological role, catalyzes the initial step of the lipid cycle reactions in the biosynthesis of the cell wall peptidoglycan: transfers peptidoglycan precursor phospho-MurNAc-pentapeptide from UDP-MurNAc-pentapeptide onto the lipid carrier undecaprenyl phosphate, yielding undecaprenyl-pyrophosphoryl-MurNAc-pentapeptide, known as lipid I. The polypeptide is Phospho-N-acetylmuramoyl-pentapeptide-transferase (Gemmatimonas aurantiaca (strain DSM 14586 / JCM 11422 / NBRC 100505 / T-27)).